The following is a 185-amino-acid chain: Ribosome-recycling factor (185 aa).

It belongs to the RRF family.

It is found in the cytoplasm. Responsible for the release of ribosomes from messenger RNA at the termination of protein biosynthesis. May increase the efficiency of translation by recycling ribosomes from one round of translation to another. This Streptococcus pneumoniae serotype 2 (strain D39 / NCTC 7466) protein is Ribosome-recycling factor.